The following is a 377-amino-acid chain: 5-hydroxytryptamine receptor 1D (377 aa).

Asn5, Asn17, and Asn21 each carry an N-linked (GlcNAc...) asparagine glycan. 3 helical membrane passes run 39-64, 76-97, and 110-134; these read ISLA…TTIL, LIGS…ISIA, and LCDI…VIAL. A disulfide bond links Cys111 and Cys188. Residues Asp118 and Cys122 each coordinate serotonin. The DRY motif; important for ligand-induced conformation changes signature appears at 135-137; that stretch reads DRY. Transmembrane regions (helical) follow at residues 155–176, 195–218, 301–326, and 336–359; these read AAAM…PLFW, ISYT…VLYG, KTLG…VLPI, and GLFD…YTVF. Ser321 serves as a coordination point for serotonin. Residues 352-356 carry the NPxxY motif; important for ligand-induced conformation changes and signaling motif; sequence NPIIY.

It belongs to the G-protein coupled receptor 1 family. As to quaternary structure, homodimer. Heterodimer with HTR1B.

It localises to the cell membrane. Its function is as follows. G-protein coupled receptor for 5-hydroxytryptamine (serotonin). Also functions as a receptor for ergot alkaloid derivatives, various anxiolytic and antidepressant drugs and other psychoactive substances. Ligand binding causes a conformation change that triggers signaling via guanine nucleotide-binding proteins (G proteins) and modulates the activity of downstream effectors, such as adenylate cyclase. HTR1D is coupled to G(i)/G(o) G alpha proteins and mediates inhibitory neurotransmission by inhibiting adenylate cyclase activity. Regulates the release of 5-hydroxytryptamine in the brain, and thereby affects neural activity. May also play a role in regulating the release of other neurotransmitters. May play a role in vasoconstriction. In Oryctolagus cuniculus (Rabbit), this protein is 5-hydroxytryptamine receptor 1D (HTR1D).